The chain runs to 376 residues: N-acetyldiaminopimelate deacetylase (376 aa).

The active site involves D69. E128 functions as the Proton acceptor in the catalytic mechanism.

Belongs to the peptidase M20A family. N-acetyldiaminopimelate deacetylase subfamily.

The catalysed reaction is N-acetyl-(2S,6S)-2,6-diaminopimelate + H2O = (2S,6S)-2,6-diaminopimelate + acetate. It functions in the pathway amino-acid biosynthesis; L-lysine biosynthesis via DAP pathway; LL-2,6-diaminopimelate from (S)-tetrahydrodipicolinate (acetylase route): step 3/3. Functionally, catalyzes the conversion of N-acetyl-diaminopimelate to diaminopimelate and acetate. This Streptococcus uberis (strain ATCC BAA-854 / 0140J) protein is N-acetyldiaminopimelate deacetylase.